The following is a 101-amino-acid chain: Large ribosomal subunit protein uL23c (101 aa).

The protein belongs to the universal ribosomal protein uL23 family. As to quaternary structure, part of the 50S ribosomal subunit.

Its subcellular location is the plastid. It is found in the chloroplast. Functionally, binds to 23S rRNA. This is Large ribosomal subunit protein uL23c (rpl23) from Cyanidium caldarium (Red alga).